A 353-amino-acid polypeptide reads, in one-letter code: Histidinol-phosphate aminotransferase (353 aa).

Position 211 is an N6-(pyridoxal phosphate)lysine (Lys211).

This sequence belongs to the class-II pyridoxal-phosphate-dependent aminotransferase family. Histidinol-phosphate aminotransferase subfamily. Homodimer. The cofactor is pyridoxal 5'-phosphate.

It carries out the reaction L-histidinol phosphate + 2-oxoglutarate = 3-(imidazol-4-yl)-2-oxopropyl phosphate + L-glutamate. It functions in the pathway amino-acid biosynthesis; L-histidine biosynthesis; L-histidine from 5-phospho-alpha-D-ribose 1-diphosphate: step 7/9. This chain is Histidinol-phosphate aminotransferase, found in Klebsiella pneumoniae subsp. pneumoniae (strain ATCC 700721 / MGH 78578).